The following is a 139-amino-acid chain: ATP synthase epsilon chain (139 aa).

It belongs to the ATPase epsilon chain family. In terms of assembly, F-type ATPases have 2 components, CF(1) - the catalytic core - and CF(0) - the membrane proton channel. CF(1) has five subunits: alpha(3), beta(3), gamma(1), delta(1), epsilon(1). CF(0) has three main subunits: a, b and c.

It localises to the cell membrane. In terms of biological role, produces ATP from ADP in the presence of a proton gradient across the membrane. This Enterococcus faecalis (strain ATCC 700802 / V583) protein is ATP synthase epsilon chain.